A 103-amino-acid chain; its full sequence is uncharacterized protein (103 aa).

The segment at 69 to 103 is disordered; that stretch reads SSISYPGGGGGGGGSAKSLSSSKPGGGGGSPLIFL. Gly residues-rich tracts occupy residues 74–83 and 92–103; these read PGGGGGGGGS and PGGGGGSPLIFL.

This is an uncharacterized protein from Saccharomyces cerevisiae (strain ATCC 204508 / S288c) (Baker's yeast).